A 439-amino-acid chain; its full sequence is Histidine--tRNA ligase (439 aa).

Belongs to the class-II aminoacyl-tRNA synthetase family. Homodimer.

Its subcellular location is the cytoplasm. It carries out the reaction tRNA(His) + L-histidine + ATP = L-histidyl-tRNA(His) + AMP + diphosphate + H(+). This Leptospira borgpetersenii serovar Hardjo-bovis (strain L550) protein is Histidine--tRNA ligase.